The primary structure comprises 1231 residues: ATP-dependent RNA helicase DHX30 (1231 aa).

The tract at residues 39-65 (PDGLEGARQEDEEEQPPPPGAEEQSTA) is disordered. DRBM domains are found at residues 80–148 (PKNL…CQLF) and 292–359 (PKNL…CQKL). The Helicase ATP-binding domain occupies 488 to 656 (LSAIEQNPVV…FGGCPVVKVP (169 aa)). 501-508 (GDTGCGKT) contacts ATP. The short motif at 603 to 606 (DEVH) is the DEAH box element. The Helicase C-terminal domain maps to 697 to 870 (LITDLVLQID…NLVVQAKIHM (174 aa)).

The protein belongs to the DEAD box helicase family. DEAH subfamily.

It localises to the cytoplasm. Its subcellular location is the mitochondrion. The protein resides in the mitochondrion matrix. It is found in the mitochondrion nucleoid. It catalyses the reaction ATP + H2O = ADP + phosphate + H(+). Its function is as follows. RNA-dependent helicase. Plays an important role in the assembly of the mitochondrial large ribosomal subunit. Required for optimal function of the zinc-finger antiviral protein ZC3HAV1. Associates with mitochondrial DNA. Involved in nervous system development and differentiation through its involvement in the up-regulation of a number of genes which are required for neurogenesis, including GSC, NCAM1, neurogenin, and NEUROD. The polypeptide is ATP-dependent RNA helicase DHX30 (DHX30) (Gallus gallus (Chicken)).